Here is a 71-residue protein sequence, read N- to C-terminus: uncharacterized protein (71 aa).

The disordered stretch occupies residues 23 to 71 (ENEKAGQSEEYDDDDKEENKKRRRNNGRRGPPEKKKSRRGGEEQTQRII). Positions 52–71 (GPPEKKKSRRGGEEQTQRII) are enriched in basic and acidic residues.

This is an uncharacterized protein from Caenorhabditis elegans.